Here is a 169-residue protein sequence, read N- to C-terminus: uncharacterized protein (169 aa).

An N-acetyltransferase domain is found at 4 to 160 (IEVKRLLVNY…EGVKEQLSED (157 aa)).

This is an uncharacterized protein from Halalkalibacterium halodurans (strain ATCC BAA-125 / DSM 18197 / FERM 7344 / JCM 9153 / C-125) (Bacillus halodurans).